A 381-amino-acid chain; its full sequence is Dof zinc finger protein 2 (381 aa).

The disordered stretch occupies residues 19 to 81 (MLMGANPNPN…ARPQKEKALN (63 aa)). Low complexity-rich tracts occupy residues 23-32 (ANPNPNGSSN) and 40-59 (SAAS…AAGA). Residues 68 to 79 (TERRARPQKEKA) are compositionally biased toward basic and acidic residues. A Dof-type zinc finger spans residues 80-134 (LNCPRCNSTNTKFCYYNNYSLQQPRYFCKTCRRYWTEGGSLRNVPVGGGSRKNKR). Cys-82, Cys-85, Cys-107, and Cys-110 together coordinate Zn(2+). The tract at residues 329–349 (AGDANSGGDHQYDHGKNQGGG) is disordered.

It is found in the nucleus. Transcription factor that may transactivate seed storage protein genes in developing seeds. The chain is Dof zinc finger protein 2 from Oryza sativa subsp. japonica (Rice).